The primary structure comprises 146 residues: Ribonuclease H (146 aa).

The region spanning 1 to 136 (MKHIEIYTDG…CDTLAREAAL (136 aa)) is the RNase H type-1 domain. The Mg(2+) site is built by Asp9, Glu47, Asp69, and Asp128.

Belongs to the RNase H family. As to quaternary structure, monomer. Mg(2+) serves as cofactor.

The protein resides in the cytoplasm. It catalyses the reaction Endonucleolytic cleavage to 5'-phosphomonoester.. Its function is as follows. Endonuclease that specifically degrades the RNA of RNA-DNA hybrids. The polypeptide is Ribonuclease H (Campylobacter jejuni subsp. jejuni serotype O:23/36 (strain 81-176)).